Consider the following 388-residue polypeptide: GTPase Obg (388 aa).

Residues 4-162 (SNFVDYVKIY…MTVIMELKLL (159 aa)) enclose the Obg domain. Residues 163-329 (ADVGLVGFPN…LKDILWEELN (167 aa)) form the OBG-type G domain. Residues 169–176 (GFPNAGKS), 194–198 (FTTLE), 216–219 (DIPG), 283–286 (TKSD), and 310–312 (SSV) contribute to the GTP site. The Mg(2+) site is built by Ser176 and Thr196. The interval 352-388 (LKDMGEDEELDYEYEEDADDEDDDLDYEYEEEDWEEK) is disordered. A compositionally biased stretch (acidic residues) spans 356-388 (GEDEELDYEYEEDADDEDDDLDYEYEEEDWEEK).

This sequence belongs to the TRAFAC class OBG-HflX-like GTPase superfamily. OBG GTPase family. In terms of assembly, monomer. Requires Mg(2+) as cofactor.

The protein localises to the cytoplasm. An essential GTPase which binds GTP, GDP and possibly (p)ppGpp with moderate affinity, with high nucleotide exchange rates and a fairly low GTP hydrolysis rate. Plays a role in control of the cell cycle, stress response, ribosome biogenesis and in those bacteria that undergo differentiation, in morphogenesis control. This chain is GTPase Obg, found in Bacteroides thetaiotaomicron (strain ATCC 29148 / DSM 2079 / JCM 5827 / CCUG 10774 / NCTC 10582 / VPI-5482 / E50).